A 497-amino-acid chain; its full sequence is Cytochrome P450 71A16 (497 aa).

Residues 1-21 form a helical membrane-spanning segment; the sequence is MEMMILISLCLTTFLTILLFF. Cys439 is a binding site for heme.

Belongs to the cytochrome P450 family. Requires heme as cofactor.

It is found in the membrane. Its function is as follows. Possesses triterpene oxidizing activity. Catalyzes the C23 hydroxylation of marneral to form 23-hydroxymarneral. Catalyzes the C23 hydroxylation of marnerol to form 23-hydroxymarnerol. The sequence is that of Cytochrome P450 71A16 (CYP71A16) from Arabidopsis thaliana (Mouse-ear cress).